Reading from the N-terminus, the 123-residue chain is MIQQESRLRVADNTGAREILVIRPLGGSVRRSAGIGDVVVATVKEAAPGGTVKAGDIVKAVIVRAKKETRRPDGSYIAFDENAAVIIKANDNDPRGTRIFGPVARELRDKKFMKIVSLAPEVL.

It belongs to the universal ribosomal protein uL14 family. In terms of assembly, part of the 50S ribosomal subunit. Forms a cluster with proteins L3 and L19. In the 70S ribosome, L14 and L19 interact and together make contacts with the 16S rRNA in bridges B5 and B8.

Functionally, binds to 23S rRNA. Forms part of two intersubunit bridges in the 70S ribosome. This is Large ribosomal subunit protein uL14 from Corynebacterium jeikeium (strain K411).